The primary structure comprises 138 residues: Large ribosomal subunit protein bL17 (138 aa).

Belongs to the bacterial ribosomal protein bL17 family. In terms of assembly, part of the 50S ribosomal subunit. Contacts protein L32.

The sequence is that of Large ribosomal subunit protein bL17 from Solidesulfovibrio magneticus (strain ATCC 700980 / DSM 13731 / RS-1) (Desulfovibrio magneticus).